A 229-amino-acid polypeptide reads, in one-letter code: Aminopyrimidine aminohydrolase (229 aa).

Asp44 is a substrate binding site. Cys137 functions as the Nucleophile in the catalytic mechanism. Substrate-binding residues include Tyr141 and Tyr167. Residue Glu208 is the Proton donor of the active site.

Belongs to the TenA family. Homotetramer.

It catalyses the reaction 4-amino-5-aminomethyl-2-methylpyrimidine + H2O = 4-amino-5-hydroxymethyl-2-methylpyrimidine + NH4(+). The enzyme catalyses thiamine + H2O = 5-(2-hydroxyethyl)-4-methylthiazole + 4-amino-5-hydroxymethyl-2-methylpyrimidine + H(+). It participates in cofactor biosynthesis; thiamine diphosphate biosynthesis. Catalyzes an amino-pyrimidine hydrolysis reaction at the C5' of the pyrimidine moiety of thiamine compounds, a reaction that is part of a thiamine salvage pathway. Thus, catalyzes the conversion of 4-amino-5-aminomethyl-2-methylpyrimidine to 4-amino-5-hydroxymethyl-2-methylpyrimidine (HMP). Is also able to catalyze the hydrolytic cleavage of thiamine; however, this thiaminase activity may not be physiologically relevant. Therefore, is probably involved in the regeneration of the thiamine pyrimidine from thiamine degraded products present in the environment, rather than in thiamine degradation. The chain is Aminopyrimidine aminohydrolase from Staphylococcus aureus (strain MRSA252).